Here is a 242-residue protein sequence, read N- to C-terminus: MLPCSLFLPKHISTSLVFLRSARHGFALLPRWVPRLSSDYPPAAPIRLLAAAASSRRPADGAGAPSRVRQNFHPDSEAAINRQINLELYASYVYLSMAYYFSRDDVALHNFARYFLRLSREEAEHAEKLMRLQNQRGGLICLQDIKKPDQNDWKSGLNAMECALLLEKNVNQSLLELHTLASDKGDPHLCDFLETHYLNEQVKSIKELGDHVNNLVKMGAPESGLAEYLFDKHTLGNENNHN.

Residues 1–49 (MLPCSLFLPKHISTSLVFLRSARHGFALLPRWVPRLSSDYPPAAPIRLL) constitute a mitochondrion transit peptide. The region spanning 70 to 219 (QNFHPDSEAA…DHVNNLVKMG (150 aa)) is the Ferritin-like diiron domain. Fe cation-binding residues include Glu87, Glu122, His125, Glu167, and Gln201.

Belongs to the ferritin family. As to quaternary structure, homooligomer of 24 subunits. The functional molecule is roughly spherical and contains a central cavity into which the polymeric mineral iron core is deposited.

The protein localises to the mitochondrion. It catalyses the reaction 4 Fe(2+) + O2 + 4 H(+) = 4 Fe(3+) + 2 H2O. Its function is as follows. Catalyzes the oxidation of ferrous iron(II) to ferric iron(III) and stores iron in a soluble, non-toxic, readily available form. Important for iron homeostasis. Iron is taken up in the ferrous form and deposited as ferric hydroxides after oxidation. In Bos taurus (Bovine), this protein is Ferritin, mitochondrial.